Reading from the N-terminus, the 240-residue chain is Ribosomal RNA small subunit methyltransferase G (240 aa).

S-adenosyl-L-methionine contacts are provided by residues glycine 80, phenylalanine 85, 103 to 105 (DSS), 131 to 132 (AE), and arginine 150.

This sequence belongs to the methyltransferase superfamily. RNA methyltransferase RsmG family.

The protein resides in the cytoplasm. Specifically methylates the N7 position of a guanine in 16S rRNA. This is Ribosomal RNA small subunit methyltransferase G from Thermoanaerobacter pseudethanolicus (strain ATCC 33223 / 39E) (Clostridium thermohydrosulfuricum).